The sequence spans 457 residues: MPMSLRLHNNLTRRVEPFAPLDPSSPTLYVCGPTVYNYAHIGNARGPVVFDVLAALLRRRYGALRYARNITDVDDKINAAAQAQGVPISTITDRFAAIYRQDMAALGVVPPDIEPEATAHIPQIVAMIEQLIASAHAYAAEGHVLFAVASFADYGKLSRRDPDEMLAGARVDVAPYKRDPGDFVLWKPSSDDLPGWDSPWGRGRPGWHIECSAMAATHLGPTIDIHAGGVDLQFPHHENEIAQSECAHGGAVFARFWLHNGMLNFSGAKMSKSLGNIETVHDLIAKHPPEALRYALLSAHYRQPLDWSDGLIEQAKNTLDRLYGTLRDLHDVAASAVIPAPVEAALDDDLNTPQALAEVARIAGEARKANDAADRARLKAELLGAGLALGLLQQEPAAWFSRGADAGDDARIAALVDERSAAKKAKDFARADAIRQQLADEGIVLEDTAQGVRWKRA.

Cysteine 31 serves as a coordination point for Zn(2+). The 'HIGH' region signature appears at 33–43 (PTVYNYAHIGN). Residues cysteine 211, histidine 236, and glutamate 240 each coordinate Zn(2+). A 'KMSKS' region motif is present at residues 269–273 (KMSKS). Lysine 272 contacts ATP.

Belongs to the class-I aminoacyl-tRNA synthetase family. In terms of assembly, monomer. Zn(2+) serves as cofactor.

The protein localises to the cytoplasm. The enzyme catalyses tRNA(Cys) + L-cysteine + ATP = L-cysteinyl-tRNA(Cys) + AMP + diphosphate. This Xanthomonas campestris pv. campestris (strain ATCC 33913 / DSM 3586 / NCPPB 528 / LMG 568 / P 25) protein is Cysteine--tRNA ligase.